We begin with the raw amino-acid sequence, 338 residues long: Glycerol-3-phosphate dehydrogenase [NAD(P)+] (338 aa).

The NADPH site is built by W11, R30, and K109. Residues K109, G143, and S145 each coordinate sn-glycerol 3-phosphate. A147 is an NADPH binding site. Residues K198, D251, S261, R262, and N263 each coordinate sn-glycerol 3-phosphate. Residue K198 is the Proton acceptor of the active site. R262 contributes to the NADPH binding site. Residues V286 and E288 each contribute to the NADPH site.

This sequence belongs to the NAD-dependent glycerol-3-phosphate dehydrogenase family.

It localises to the cytoplasm. It catalyses the reaction sn-glycerol 3-phosphate + NAD(+) = dihydroxyacetone phosphate + NADH + H(+). The enzyme catalyses sn-glycerol 3-phosphate + NADP(+) = dihydroxyacetone phosphate + NADPH + H(+). The protein operates within membrane lipid metabolism; glycerophospholipid metabolism. Its function is as follows. Catalyzes the reduction of the glycolytic intermediate dihydroxyacetone phosphate (DHAP) to sn-glycerol 3-phosphate (G3P), the key precursor for phospholipid synthesis. The polypeptide is Glycerol-3-phosphate dehydrogenase [NAD(P)+] (Cupriavidus taiwanensis (strain DSM 17343 / BCRC 17206 / CCUG 44338 / CIP 107171 / LMG 19424 / R1) (Ralstonia taiwanensis (strain LMG 19424))).